Consider the following 136-residue polypeptide: Probable disulfide formation protein (136 aa).

A helical transmembrane segment spans residues 7–26; it reads NNALYFAWLICSTGTVMSIY. Cysteines 36 and 39 form a disulfide. 2 consecutive transmembrane segments (helical) span residues 41-60 and 67-84; these read YQRI…TYRE and YALP…YQIC. Cysteine 96 and cysteine 101 are disulfide-bonded. Residues 109–133 traverse the membrane as a helical segment; it reads GFITVPMASALAFCAISCLLILSGS.

Belongs to the DsbB family. BdbC subfamily.

The protein resides in the cell inner membrane. Its function is as follows. Required for disulfide bond formation in some proteins. The protein is Probable disulfide formation protein of Chlamydia caviae (strain ATCC VR-813 / DSM 19441 / 03DC25 / GPIC) (Chlamydophila caviae).